Here is a 614-residue protein sequence, read N- to C-terminus: UvrABC system protein C (614 aa).

Positions 14–91 (TSPGCYIHKD…IKENKPKYNI (78 aa)) constitute a GIY-YIG domain. One can recognise a UVR domain in the interval 196 to 231 (DKIIDDLKSKMAVAAQSMEFERAAEYRDLIQAIGTL). The tract at residues 595 to 614 (LSQVAEERVDYQTEGNHNEP) is disordered. Residues 599–614 (AEERVDYQTEGNHNEP) show a composition bias toward basic and acidic residues.

The protein belongs to the UvrC family. As to quaternary structure, interacts with UvrB in an incision complex.

The protein localises to the cytoplasm. Functionally, the UvrABC repair system catalyzes the recognition and processing of DNA lesions. UvrC both incises the 5' and 3' sides of the lesion. The N-terminal half is responsible for the 3' incision and the C-terminal half is responsible for the 5' incision. The protein is UvrABC system protein C of Streptococcus pneumoniae serotype 2 (strain D39 / NCTC 7466).